The primary structure comprises 623 residues: Zinc finger protein 131 (623 aa).

The 65-residue stretch at 34–98 folds into the BTB domain; the sequence is TDITLIVDGH…TYTAKLMIQG (65 aa). The short motif at 137–148 is the Nuclear localization signal 1 element; sequence TGKNEAKKRKIA. C2H2-type zinc fingers lie at residues 261 to 283, 288 to 311, and 328 to 350; these read FHCE…MKSH, FKCE…NCYH, and HVCQ…LRKH. Glycyl lysine isopeptide (Lys-Gly) (interchain with G-Cter in SUMO2) cross-links involve residues Lys-289 and Lys-295. A Nuclear localization signal 2 motif is present at residues 317–328; it reads VSKKQRTGKKIH. A C2H2-type 4; degenerate zinc finger spans residues 356-381; it reads FECPNCHERFARNSTLKCHLTACQTG. 2 consecutive C2H2-type zinc fingers follow at residues 392 to 414 and 420 to 443; these read YECQ…LVIH and NHCT…SDAH. The span at 573 to 617 shows a compositional bias: basic and acidic residues; sequence NQEERESSQADAAEAAREDHEDAEDLETKPTVDSEAEKAENEDRT. The segment at 573-623 is disordered; sequence NQEERESSQADAAEAAREDHEDAEDLETKPTVDSEAEKAENEDRTALPVLE. A Glycyl lysine isopeptide (Lys-Gly) (interchain with G-Cter in SUMO) cross-link involves residue Lys-601.

It belongs to the krueppel C2H2-type zinc-finger protein family. Monosumoylated at Lys-601 by CBX4 and UHRF2. Sumoylation may potentiate ZNF131 inhibition of estrogen signaling. Sumoylation does not interfere with ubiquitination. In terms of processing, ubiquitinated. In terms of tissue distribution, predominant expression is found in different brain areas such as the occipital and temporal lobe, the nucleus caudatus, hippocampus, and the cerebellum as well as in testis and thymus.

The protein resides in the nucleus. Its function is as follows. Plays a role during development and organogenesis as well as in the function of the adult central nervous system. May be involved in transcriptional regulation as a repressor of ESR1/ER-alpha signaling. The sequence is that of Zinc finger protein 131 (ZNF131) from Homo sapiens (Human).